The chain runs to 45 residues: Protein PsbN (45 aa).

The chain crosses the membrane as a helical span at residues 12–30; that stretch reads FLSRSLVSFTGYALYTAFG.

Belongs to the PsbN family.

Its subcellular location is the plastid. The protein localises to the chloroplast thylakoid membrane. May play a role in photosystem I and II biogenesis. This Adiantum capillus-veneris (Maidenhair fern) protein is Protein PsbN.